Consider the following 349-residue polypeptide: Magnesium-protoporphyrin IX monomethyl ester [oxidative] cyclase (349 aa).

The tract at residues Met-1–His-22 is disordered.

Belongs to the AcsF family. The cofactor is Fe cation.

The enzyme catalyses Mg-protoporphyrin IX 13-monomethyl ester + 3 NADPH + 3 O2 + 2 H(+) = 3,8-divinyl protochlorophyllide a + 3 NADP(+) + 5 H2O. It functions in the pathway porphyrin-containing compound metabolism; chlorophyll biosynthesis (light-independent). Catalyzes the formation of the isocyclic ring in chlorophyll biosynthesis. Mediates the cyclase reaction, which results in the formation of divinylprotochlorophyllide (Pchlide) characteristic of all chlorophylls from magnesium-protoporphyrin IX 13-monomethyl ester (MgPMME). The protein is Magnesium-protoporphyrin IX monomethyl ester [oxidative] cyclase of Prochlorococcus marinus (strain MIT 9211).